The following is a 614-amino-acid chain: Sodium- and chloride-dependent betaine transporter (614 aa).

Topologically, residues methionine 1–glutamate 44 are cytoplasmic. The next 3 helical transmembrane spans lie at phenylalanine 45 to leucine 65, alanine 73 to leucine 92, and glycine 117 to leucine 137. The Extracellular portion of the chain corresponds to alanine 138–arginine 210. Cysteine 157 and cysteine 166 are joined by a disulfide. Residues asparagine 171 and asparagine 183 are each glycosylated (N-linked (GlcNAc...) asparagine). Transmembrane regions (helical) follow at residues tryptophan 211–tryptophan 229, valine 238–isoleucine 255, isoleucine 291–tyrosine 308, isoleucine 320–leucine 341, methionine 374–leucine 393, leucine 423–threonine 441, glycine 458–alanine 478, isoleucine 499–serine 518, and isoleucine 538–isoleucine 556. At threonine 557–leucine 614 the chain is on the cytoplasmic side. The disordered stretch occupies residues aspartate 576–leucine 614.

Belongs to the sodium:neurotransmitter symporter (SNF) (TC 2.A.22) family. SLC6A12 subfamily. In terms of assembly, interacts with LIN7C. As to expression, expressed in kidney, liver, heart, skeletal muscle, placenta, and a widespread distribution in the brain.

The protein localises to the basolateral cell membrane. It is found in the cell membrane. It catalyses the reaction 4-aminobutanoate(out) + chloride(out) + 3 Na(+)(out) = 4-aminobutanoate(in) + chloride(in) + 3 Na(+)(in). The enzyme catalyses glycine betaine(out) + 2 chloride(out) + 3 Na(+)(out) = glycine betaine(in) + 2 chloride(in) + 3 Na(+)(in). In terms of biological role, transporter that mediates cellular uptake of betaine and GABA in a sodium- and chloride-dependent process. May have a role in regulation of GABAergic transmission in the brain through the reuptake of GABA into presynaptic terminals, as well as in osmotic regulation. Probably also involved in renal and hepatic osmotic regulation. This is Sodium- and chloride-dependent betaine transporter from Homo sapiens (Human).